The sequence spans 124 residues: Aspartate 1-decarboxylase (124 aa).

S21 functions as the Schiff-base intermediate with substrate; via pyruvic acid in the catalytic mechanism. Position 21 is a pyruvic acid (Ser) (S21). Residue T53 participates in substrate binding. The Proton donor role is filled by Y54. Substrate is bound at residue G69–A71.

Belongs to the PanD family. Heterooctamer of four alpha and four beta subunits. Pyruvate is required as a cofactor. In terms of processing, is synthesized initially as an inactive proenzyme, which is activated by self-cleavage at a specific serine bond to produce a beta-subunit with a hydroxyl group at its C-terminus and an alpha-subunit with a pyruvoyl group at its N-terminus.

It is found in the cytoplasm. It catalyses the reaction L-aspartate + H(+) = beta-alanine + CO2. Its pathway is cofactor biosynthesis; (R)-pantothenate biosynthesis; beta-alanine from L-aspartate: step 1/1. In terms of biological role, catalyzes the pyruvoyl-dependent decarboxylation of aspartate to produce beta-alanine. In Dehalococcoides mccartyi (strain CBDB1), this protein is Aspartate 1-decarboxylase.